The primary structure comprises 63 residues: Large ribosomal subunit protein eL24 (63 aa).

Positions 7, 10, 33, and 37 each coordinate Zn(2+). Residues 7-37 form a C4-type zinc finger; the sequence is CSFCGGSIEPGTGLMYVLRNGQILWFCSSKC.

This sequence belongs to the eukaryotic ribosomal protein eL24 family. In terms of assembly, part of the 50S ribosomal subunit. Forms a cluster with proteins L3 and L14. Zn(2+) is required as a cofactor.

In terms of biological role, binds to the 23S rRNA. The chain is Large ribosomal subunit protein eL24 from Aeropyrum pernix (strain ATCC 700893 / DSM 11879 / JCM 9820 / NBRC 100138 / K1).